The following is a 141-amino-acid chain: Vasotocin-neurophysin VT (141 aa).

A disulfide bridge links Cys-1 with Cys-6. At Gly-9 the chain carries Glycine amide. 7 cysteine pairs are disulfide-bonded: Cys-22/Cys-66, Cys-25/Cys-39, Cys-33/Cys-56, Cys-40/Cys-46, Cys-73/Cys-85, Cys-79/Cys-97, and Cys-86/Cys-91. Asn-117 carries an N-linked (GlcNAc...) asparagine glycan.

The protein belongs to the vasopressin/oxytocin family. Seven disulfide bonds are present in neurophysin.

The protein localises to the secreted. Functionally, vasotocin is an antidiuretic hormone. In Pelophylax lessonae (Pool frog), this protein is Vasotocin-neurophysin VT.